The primary structure comprises 480 residues: tRNA-2-methylthio-N(6)-dimethylallyladenosine synthase (480 aa).

Residues 3–120 (KKLYIKTWGC…LPEMLNQLQH (118 aa)) enclose the MTTase N-terminal domain. Cys12, Cys49, Cys83, Cys157, Cys161, and Cys164 together coordinate [4Fe-4S] cluster. The 233-residue stretch at 143-375 (KADGASAFVS…QEQITHQALR (233 aa)) folds into the Radical SAM core domain. Residues 378 to 441 (RQMLNTEQRV…ANSLRGELVR (64 aa)) form the TRAM domain.

Belongs to the methylthiotransferase family. MiaB subfamily. As to quaternary structure, monomer. [4Fe-4S] cluster serves as cofactor.

The protein localises to the cytoplasm. The enzyme catalyses N(6)-dimethylallyladenosine(37) in tRNA + (sulfur carrier)-SH + AH2 + 2 S-adenosyl-L-methionine = 2-methylsulfanyl-N(6)-dimethylallyladenosine(37) in tRNA + (sulfur carrier)-H + 5'-deoxyadenosine + L-methionine + A + S-adenosyl-L-homocysteine + 2 H(+). In terms of biological role, catalyzes the methylthiolation of N6-(dimethylallyl)adenosine (i(6)A), leading to the formation of 2-methylthio-N6-(dimethylallyl)adenosine (ms(2)i(6)A) at position 37 in tRNAs that read codons beginning with uridine. This Colwellia psychrerythraea (strain 34H / ATCC BAA-681) (Vibrio psychroerythus) protein is tRNA-2-methylthio-N(6)-dimethylallyladenosine synthase.